The primary structure comprises 62 residues: Large ribosomal subunit protein bL32 (62 aa).

The tract at residues 1–20 (MAVPARHTSKQKKRSRRGHI) is disordered. Basic residues predominate over residues 7 to 20 (HTSKQKKRSRRGHI).

This sequence belongs to the bacterial ribosomal protein bL32 family.

This is Large ribosomal subunit protein bL32 from Lactobacillus acidophilus (strain ATCC 700396 / NCK56 / N2 / NCFM).